Reading from the N-terminus, the 243-residue chain is 35 kDa gas vesicle protein (243 aa).

It belongs to the gas vesicle GvpC family.

It is found in the gas vesicle shell. In terms of biological role, may confer stability to the gas vesicle shells. Gas vesicles are small, hollow, gas filled protein structures that are found in several microbial planktonic microorganisms. They allow the positioning of the organism at the favorable depth for growth. This is 35 kDa gas vesicle protein from Dactylococcopsis salina (strain PCC 8305) (Myxobactron salinum).